The chain runs to 178 residues: ATP-dependent protease subunit HslV (178 aa).

Thr-7 is a catalytic residue. Positions 162, 165, and 168 each coordinate Na(+).

The protein belongs to the peptidase T1B family. HslV subfamily. A double ring-shaped homohexamer of HslV is capped on each side by a ring-shaped HslU homohexamer. The assembly of the HslU/HslV complex is dependent on binding of ATP.

The protein resides in the cytoplasm. It catalyses the reaction ATP-dependent cleavage of peptide bonds with broad specificity.. Its activity is regulated as follows. Allosterically activated by HslU binding. Its function is as follows. Protease subunit of a proteasome-like degradation complex believed to be a general protein degrading machinery. The protein is ATP-dependent protease subunit HslV of Paraburkholderia phymatum (strain DSM 17167 / CIP 108236 / LMG 21445 / STM815) (Burkholderia phymatum).